The following is a 62-amino-acid chain: Metallothionein-4 (62 aa).

Cys6, Cys8, Cys14, Cys16, Cys20, Cys22, Cys25, Cys27, Cys30, Cys34, Cys35, Cys37, Cys38, Cys42, Cys45, Cys49, Cys51, Cys58, Cys60, and Cys61 together coordinate a divalent metal cation.

The protein belongs to the metallothionein superfamily. Type 1 family.

In terms of biological role, seems to bind zinc and copper. Could play a special role in regulating zinc metabolism during the differentiation of stratified epithelia. The polypeptide is Metallothionein-4 (MT4) (Canis lupus familiaris (Dog)).